Consider the following 616-residue polypeptide: Alpha terpineol synthase, chloroplastic (616 aa).

The transit peptide at 1–41 (MALLSVAPLQKPLTSCSPFSTTMPTLGVCTPRKVVTPSIIM) directs the protein to the chloroplast. Mg(2+) is bound by residues D367, D371, and D519. The DDXXD motif motif lies at 367-371 (DDIYD).

This sequence belongs to the terpene synthase family. Tpsd subfamily. Mg(2+) is required as a cofactor. Mn(2+) serves as cofactor.

Its subcellular location is the plastid. The protein localises to the chloroplast. It carries out the reaction (2E)-geranyl diphosphate + H2O = (S)-alpha-terpineol + diphosphate. The catalysed reaction is (2E)-geranyl diphosphate + H2O = 1,8-cineole + diphosphate. The enzyme catalyses (2E)-geranyl diphosphate = beta-myrcene + diphosphate. It catalyses the reaction (2E)-geranyl diphosphate = (1S,5S)-sabinene + diphosphate. It functions in the pathway terpene metabolism; oleoresin biosynthesis. Its pathway is secondary metabolite biosynthesis; terpenoid biosynthesis. Its function is as follows. Monoterpene synthase (TPS) involved in the biosynthesis of monoterpene natural products included in conifer oleoresin secretions and volatile emissions; these compounds contribute to biotic and abiotic stress defense against herbivores and pathogens. Catalyzes the conversion of (2E)-geranyl diphosphate (GPP) to alpha-terpineol and, to a lower extent, to 1,8-cineole, myrcene and (-)-sabinene. The chain is Alpha terpineol synthase, chloroplastic from Pinus contorta (Shore pine).